Reading from the N-terminus, the 557-residue chain is Potassium-transporting ATPase potassium-binding subunit (557 aa).

Transmembrane regions (helical) follow at residues 5 to 25, 63 to 83, 132 to 152, 170 to 190, 253 to 273, 283 to 303, 329 to 349, 356 to 376, 379 to 399, 416 to 436, 484 to 504, and 526 to 546; these read GFLL…PLGS, LCAI…MLLG, GLTV…FALI, LLRI…LFFI, FVQM…FGEV, LLWA…WAEV, VLVS…AVIA, ALGG…FGGV, GLYG…LMIG, LTAL…ALAM, LLAL…MAIA, and LFVG…FIPA.

Belongs to the KdpA family. As to quaternary structure, the system is composed of three essential subunits: KdpA, KdpB and KdpC.

It localises to the cell inner membrane. Functionally, part of the high-affinity ATP-driven potassium transport (or Kdp) system, which catalyzes the hydrolysis of ATP coupled with the electrogenic transport of potassium into the cytoplasm. This subunit binds the periplasmic potassium ions and delivers the ions to the membrane domain of KdpB through an intramembrane tunnel. This Escherichia coli O81 (strain ED1a) protein is Potassium-transporting ATPase potassium-binding subunit.